The following is a 366-amino-acid chain: 5-formaminoimidazole-4-carboxamide-1-(beta)-D-ribofuranosyl 5'-monophosphate synthetase (366 aa).

Residues His-27 and Ser-96 each contribute to the 5-amino-1-(5-phospho-beta-D-ribosyl)imidazole-4-carboxamide site. An ATP-grasp domain is found at 131–357; sequence RKWLEDAGVP…IAREIKEAVK (227 aa). Residues 154–208 and Glu-239 each bind ATP; that span reads PVIV…VRFY. Asn-263 is a 5-amino-1-(5-phospho-beta-D-ribosyl)imidazole-4-carboxamide binding site. Residues Glu-302 and Glu-315 each coordinate Mg(2+).

This sequence belongs to the phosphohexose mutase family. The cofactor is Mg(2+). Requires Mn(2+) as cofactor.

The enzyme catalyses 5-amino-1-(5-phospho-beta-D-ribosyl)imidazole-4-carboxamide + formate + ATP = 5-formamido-1-(5-phospho-D-ribosyl)imidazole-4-carboxamide + ADP + phosphate. It functions in the pathway purine metabolism; IMP biosynthesis via de novo pathway; 5-formamido-1-(5-phospho-D-ribosyl)imidazole-4-carboxamide from 5-amino-1-(5-phospho-D-ribosyl)imidazole-4-carboxamide (formate route): step 1/1. Functionally, catalyzes the ATP- and formate-dependent formylation of 5-aminoimidazole-4-carboxamide-1-beta-d-ribofuranosyl 5'-monophosphate (AICAR) to 5-formaminoimidazole-4-carboxamide-1-beta-d-ribofuranosyl 5'-monophosphate (FAICAR) in the absence of folates. This Korarchaeum cryptofilum (strain OPF8) protein is 5-formaminoimidazole-4-carboxamide-1-(beta)-D-ribofuranosyl 5'-monophosphate synthetase.